The chain runs to 197 residues: Mediator of RNA polymerase II transcription subunit 21 (197 aa).

A disordered region spans residues 37–112 (PPPSVPSAVP…APPRPDSPNT (76 aa)). Composition is skewed to low complexity over residues 60–70 (PTSGTATNTPG) and 90–100 (PQMQQQHQEQP). Residues 140 to 183 (GIKSSEAEQQERIKQLAEELRVVEEERSARRRELRRLGEKVDGL) adopt a coiled-coil conformation.

Belongs to the Mediator complex subunit 21 family. In terms of assembly, component of the Mediator complex.

The protein localises to the nucleus. Its function is as follows. Component of the Mediator complex, a coactivator involved in the regulated transcription of nearly all RNA polymerase II-dependent genes. Mediator functions as a bridge to convey information from gene-specific regulatory proteins to the basal RNA polymerase II transcription machinery. Mediator is recruited to promoters by direct interactions with regulatory proteins and serves as a scaffold for the assembly of a functional preinitiation complex with RNA polymerase II and the general transcription factors. In Coccidioides immitis (strain RS) (Valley fever fungus), this protein is Mediator of RNA polymerase II transcription subunit 21 (SRB7).